The chain runs to 585 residues: Proline--tRNA ligase (585 aa).

K173 is covalently cross-linked (Isoglutamyl lysine isopeptide (Lys-Gln) (interchain with Q-Cter in protein Pup)).

Belongs to the class-II aminoacyl-tRNA synthetase family. ProS type 1 subfamily. Homodimer.

It localises to the cytoplasm. The catalysed reaction is tRNA(Pro) + L-proline + ATP = L-prolyl-tRNA(Pro) + AMP + diphosphate. Functionally, catalyzes the attachment of proline to tRNA(Pro) in a two-step reaction: proline is first activated by ATP to form Pro-AMP and then transferred to the acceptor end of tRNA(Pro). As ProRS can inadvertently accommodate and process non-cognate amino acids such as alanine and cysteine, to avoid such errors it has two additional distinct editing activities against alanine. One activity is designated as 'pretransfer' editing and involves the tRNA(Pro)-independent hydrolysis of activated Ala-AMP. The other activity is designated 'posttransfer' editing and involves deacylation of mischarged Ala-tRNA(Pro). The misacylated Cys-tRNA(Pro) is not edited by ProRS. In Mycolicibacterium smegmatis (strain ATCC 700084 / mc(2)155) (Mycobacterium smegmatis), this protein is Proline--tRNA ligase (proS).